The primary structure comprises 232 residues: MNSPLSYNNVIEVTDLQRAFKQGEHEIQILRGIDLIVRRGEILALLGPSGAGKSTFLQAIGLLENGFTGSINILGQEIGSLNDKERTAIRRDHLGFVYQFHHLLPDFSALENVMLPQLIQGKSPHQAKEHAHFLLNSLKLEERLKHYPSQLSGGEQQRVAVARALANRPALVLADEPTGNLDEATGDIVLHEFLRLVRRQGSAAIIATHNMAMARKMDRIVTLHDGRLIEEY.

An ABC transporter domain is found at 11-232; sequence IEVTDLQRAF…LHDGRLIEEY (222 aa). 47-54 is an ATP binding site; the sequence is GPSGAGKS.

This sequence belongs to the ABC transporter superfamily. Lipoprotein translocase (TC 3.A.1.125) family. The complex is composed of two ATP-binding proteins (LolD) and two transmembrane proteins (LolC and LolE).

The protein resides in the cell inner membrane. Functionally, part of the ABC transporter complex LolCDE involved in the translocation of mature outer membrane-directed lipoproteins, from the inner membrane to the periplasmic chaperone, LolA. Responsible for the formation of the LolA-lipoprotein complex in an ATP-dependent manner. The protein is Lipoprotein-releasing system ATP-binding protein LolD of Zymomonas mobilis subsp. mobilis (strain ATCC 31821 / ZM4 / CP4).